The sequence spans 193 residues: Peptidyl-tRNA hydrolase (193 aa).

Position 17 (His-17) interacts with tRNA. His-22 serves as the catalytic Proton acceptor. Residues Phe-68, Asn-70, and Asn-116 each coordinate tRNA.

Belongs to the PTH family. Monomer.

The protein localises to the cytoplasm. It catalyses the reaction an N-acyl-L-alpha-aminoacyl-tRNA + H2O = an N-acyl-L-amino acid + a tRNA + H(+). In terms of biological role, hydrolyzes ribosome-free peptidyl-tRNAs (with 1 or more amino acids incorporated), which drop off the ribosome during protein synthesis, or as a result of ribosome stalling. Functionally, catalyzes the release of premature peptidyl moieties from peptidyl-tRNA molecules trapped in stalled 50S ribosomal subunits, and thus maintains levels of free tRNAs and 50S ribosomes. The sequence is that of Peptidyl-tRNA hydrolase from Xanthomonas campestris pv. campestris (strain 8004).